Consider the following 603-residue polypeptide: Methionine--tRNA ligase (603 aa).

The 'HIGH' region motif lies at 14-24 (PYANGPRHIGH). The Zn(2+) site is built by C146, C149, C159, and C162. The 'KMSKS' region signature appears at 354-358 (KFSSS). S357 serves as a coordination point for ATP.

Belongs to the class-I aminoacyl-tRNA synthetase family. MetG type 1 subfamily. As to quaternary structure, monomer. The cofactor is Zn(2+).

It localises to the cytoplasm. It catalyses the reaction tRNA(Met) + L-methionine + ATP = L-methionyl-tRNA(Met) + AMP + diphosphate. Functionally, is required not only for elongation of protein synthesis but also for the initiation of all mRNA translation through initiator tRNA(fMet) aminoacylation. This is Methionine--tRNA ligase from Salinispora tropica (strain ATCC BAA-916 / DSM 44818 / JCM 13857 / NBRC 105044 / CNB-440).